A 240-amino-acid chain; its full sequence is MADIRITGRMVNFTRLTFDTNDHDAIRQQLTSILNEGSYQGTVVILDSTVEQELIALIQLLISLGLQPMAVIDGILSDEAKAIQFPVLPADQPLQRIKASKEEITVIATPKAADTTPETKTPITKTAIAHKTSYHDEILRTGQCLVQDHGDIILNAGMNSGSEVIASGNIHIYGNVRGRIIAGAGGNPSARIFCHALEAELVSIAGTYCVAEDIPKDVLKKSVHIYLNDNQELEFRALEF.

Belongs to the MinC family. As to quaternary structure, interacts with MinD and FtsZ.

Functionally, cell division inhibitor that blocks the formation of polar Z ring septums. Rapidly oscillates between the poles of the cell to destabilize FtsZ filaments that have formed before they mature into polar Z rings. Prevents FtsZ polymerization. The sequence is that of Probable septum site-determining protein MinC from Acinetobacter baylyi (strain ATCC 33305 / BD413 / ADP1).